A 282-amino-acid chain; its full sequence is Cytochrome c1 (282 aa).

An N-terminal signal peptide occupies residues 1–24 (MTIKLRFVASLALVFGLAAASVPA). Heme c is bound by residues Cys62, Cys65, His66, and Met207. The chain crosses the membrane as a helical span at residues 253–273 (WWVLGFLVIFTGLLVATKIVV).

As to quaternary structure, the main subunits of complex b-c1 are: cytochrome b, cytochrome c1 and the Rieske protein. In terms of processing, binds 1 heme c group covalently per subunit.

Its subcellular location is the cell membrane. Functionally, component of the ubiquinol-cytochrome c reductase complex (complex III or cytochrome b-c1 complex), which is a respiratory chain that generates an electrochemical potential coupled to ATP synthesis. c1 functions as an electron donor to cytochrome c. This Blastochloris viridis (Rhodopseudomonas viridis) protein is Cytochrome c1 (petC).